The chain runs to 269 residues: Hydroxypyruvate/pyruvate aldolase (269 aa).

The Proton acceptor role is filled by His-47. Glu-151 and Asp-177 together coordinate a divalent metal cation.

It belongs to the HpcH/HpaI aldolase family. A divalent metal cation is required as a cofactor.

It catalyses the reaction D-glyceraldehyde + 3-hydroxypyruvate = 2-dehydro-D-gluconate. The catalysed reaction is D-glyceraldehyde + 3-hydroxypyruvate = (3R,4S,5R)-3,4,5,6-tetrahydroxy-2-oxohexanoate. The enzyme catalyses D-glyceraldehyde + 3-hydroxypyruvate = 2-dehydro-D-galactonate. It carries out the reaction D-glyceraldehyde + pyruvate = 2-dehydro-3-deoxy-L-galactonate. It catalyses the reaction 2-dehydro-3-deoxy-D-gluconate = D-glyceraldehyde + pyruvate. Its function is as follows. Aldolase which can catalyze in vitro the aldolisation reaction between hydroxypyruvate (HPA) or pyruvate (PA) and D-glyceraldehyde (D-GA). The condensation of hydroxypyruvate and D-glyceraldehyde produces 2-dehydro-D-gluconate as the major product, (3R,4S,5R)-3,4,5,6-tetrahydroxy-2-oxohexanoate and 2-dehydro-D-galactonate. The condensation of pyruvate and D-glyceraldehyde produces 2-dehydro-3-deoxy-L-galactonate as the major product and 2-dehydro-3-deoxy-D-gluconate. This Cupriavidus necator (strain ATCC 17699 / DSM 428 / KCTC 22496 / NCIMB 10442 / H16 / Stanier 337) (Ralstonia eutropha) protein is Hydroxypyruvate/pyruvate aldolase.